The primary structure comprises 177 residues: Large ribosomal subunit protein uL10 (177 aa).

Belongs to the universal ribosomal protein uL10 family. Part of the ribosomal stalk of the 50S ribosomal subunit. The N-terminus interacts with L11 and the large rRNA to form the base of the stalk. The C-terminus forms an elongated spine to which L12 dimers bind in a sequential fashion forming a multimeric L10(L12)X complex.

Its function is as follows. Forms part of the ribosomal stalk, playing a central role in the interaction of the ribosome with GTP-bound translation factors. In Leptospira biflexa serovar Patoc (strain Patoc 1 / Ames), this protein is Large ribosomal subunit protein uL10.